The primary structure comprises 164 residues: MPEQLKQRVETCYQQAEAFFKRRFPRPEVSFKLRGQKAGVAHLHENLLRFNLQLYRENQEDFLRQTVAHEVAHLVAHQLFGDRIQAHGEEWQLIMRGVYELPPNRCHNYDVQRRAVTRYIYRCPCPQSDFPFTAQRHKLVHQGRRYLCKRCREILVYSGETRVE.

A SprT-like domain is found at 13–156; sequence YQQAEAFFKR…LCKRCREILV (144 aa). His69 contributes to the Zn(2+) binding site. Residue Glu70 is part of the active site. Zn(2+) is bound at residue His73.

Belongs to the SprT family. Zn(2+) serves as cofactor.

It localises to the cytoplasm. This Pseudomonas putida (strain ATCC 700007 / DSM 6899 / JCM 31910 / BCRC 17059 / LMG 24140 / F1) protein is Protein SprT.